A 129-amino-acid chain; its full sequence is MHLAYPAVLSALLFSTGLYGVLARRNAILVLMSVELMLNAVNLNLVAFDVWLSKTARDTLHSGQALTLFTIAIAAAEIGIGLAIVLAVYRNRGTSDIDKLRDTAEGPEPDGPGTDGSAPTAAEKAEATA.

3 helical membrane passes run 3–23 (LAYP…GVLA), 28–48 (ILVL…LVAF), and 68–88 (LFTI…VLAV). Residues 98–129 (DKLRDTAEGPEPDGPGTDGSAPTAAEKAEATA) form a disordered region. Residues 111–122 (GPGTDGSAPTAA) show a composition bias toward low complexity.

This sequence belongs to the complex I subunit 4L family. As to quaternary structure, NDH-1 is composed of 14 different subunits. Subunits NuoA, H, J, K, L, M, N constitute the membrane sector of the complex.

It is found in the cell membrane. The enzyme catalyses a quinone + NADH + 5 H(+)(in) = a quinol + NAD(+) + 4 H(+)(out). Its function is as follows. NDH-1 shuttles electrons from NADH, via FMN and iron-sulfur (Fe-S) centers, to quinones in the respiratory chain. The immediate electron acceptor for the enzyme in this species is believed to be a menaquinone. Couples the redox reaction to proton translocation (for every two electrons transferred, four hydrogen ions are translocated across the cytoplasmic membrane), and thus conserves the redox energy in a proton gradient. This Streptomyces avermitilis (strain ATCC 31267 / DSM 46492 / JCM 5070 / NBRC 14893 / NCIMB 12804 / NRRL 8165 / MA-4680) protein is NADH-quinone oxidoreductase subunit K 2.